Consider the following 203-residue polypeptide: A-type ATP synthase subunit E (203 aa).

Belongs to the V-ATPase E subunit family. Has multiple subunits with at least A(3), B(3), C, D, E, F, H, I and proteolipid K(x).

It localises to the cell membrane. Functionally, component of the A-type ATP synthase that produces ATP from ADP in the presence of a proton gradient across the membrane. The sequence is that of A-type ATP synthase subunit E from Thermococcus sibiricus (strain DSM 12597 / MM 739).